A 57-amino-acid chain; its full sequence is Alpha-conotoxin-like Sm1.2 (57 aa).

The signal sequence occupies residues 1 to 16; it reads MFTVFLLVVLATTVVS. A propeptide spanning residues 17–42 is cleaved from the precursor; that stretch reads FPSDRESDGANDEARTDEPEEHGPDR. The interval 17-46 is disordered; the sequence is FPSDRESDGANDEARTDEPEEHGPDRNGCC. The segment covering 19–41 has biased composition (basic and acidic residues); it reads SDRESDGANDEARTDEPEEHGPD. Disulfide bonds link cysteine 45–cysteine 51 and cysteine 46–cysteine 56. The residue at position 56 (cysteine 56) is a Cysteine amide.

Belongs to the conotoxin A superfamily. As to expression, expressed by the venom duct.

It localises to the secreted. Its function is as follows. Alpha-conotoxins act on postsynaptic membranes, they bind to the nicotinic acetylcholine receptors (nAChR) and thus inhibit them. This Conus stercusmuscarum (Fly-specked cone) protein is Alpha-conotoxin-like Sm1.2.